A 257-amino-acid chain; its full sequence is 5'-nucleotidase SurE (257 aa).

Residues Asp8, Asp9, Ser40, and Asn92 each contribute to the a divalent metal cation site.

The protein belongs to the SurE nucleotidase family. It depends on a divalent metal cation as a cofactor.

It is found in the cytoplasm. The catalysed reaction is a ribonucleoside 5'-phosphate + H2O = a ribonucleoside + phosphate. Functionally, nucleotidase that shows phosphatase activity on nucleoside 5'-monophosphates. This is 5'-nucleotidase SurE from Rhizobium rhizogenes (strain K84 / ATCC BAA-868) (Agrobacterium radiobacter).